The following is a 398-amino-acid chain: Na(+)/H(+) antiporter NhaA 2 (398 aa).

A run of 11 helical transmembrane segments spans residues 17–37, 59–79, 95–115, 125–145, 154–174, 179–199, 213–233, 262–282, 288–308, 331–351, and 364–384; these read ILLM…LAGL, LLLW…GLEV, SLPT…YLGF, GWAI…ALLG, VFLL…IALF, LSIT…ILNL, LLLW…GVVI, FMIL…GMSL, PAAL…VLLF, AVAV…SLAF, and LGTL…LTKV.

The protein belongs to the NhaA Na(+)/H(+) (TC 2.A.33) antiporter family.

The protein localises to the cell inner membrane. It carries out the reaction Na(+)(in) + 2 H(+)(out) = Na(+)(out) + 2 H(+)(in). In terms of biological role, na(+)/H(+) antiporter that extrudes sodium in exchange for external protons. In Shewanella denitrificans (strain OS217 / ATCC BAA-1090 / DSM 15013), this protein is Na(+)/H(+) antiporter NhaA 2.